The primary structure comprises 170 residues: Ubiquitin-conjugating enzyme E2 J2-like (170 aa).

Residues 15-165 enclose the UBC core domain; sequence DCITRLKREF…NKTFCELFPY (151 aa). Cys97 acts as the Glycyl thioester intermediate in catalysis.

The protein belongs to the ubiquitin-conjugating enzyme family.

The catalysed reaction is S-ubiquitinyl-[E1 ubiquitin-activating enzyme]-L-cysteine + [E2 ubiquitin-conjugating enzyme]-L-cysteine = [E1 ubiquitin-activating enzyme]-L-cysteine + S-ubiquitinyl-[E2 ubiquitin-conjugating enzyme]-L-cysteine.. It participates in protein modification; protein ubiquitination. Its function is as follows. Catalyzes the covalent attachment of ubiquitin to other proteins. This Dictyostelium discoideum (Social amoeba) protein is Ubiquitin-conjugating enzyme E2 J2-like.